The following is an 83-amino-acid chain: Scyreptin (83 aa).

Functionally, cationic antimicrobial peptide that exhibits a potent and broad-spectrum antimicrobial activity against both bacteria and fungi, as well as against the multidrug-resistant bacteria P.aeruginosa. Exhibits rapid bactericidal kinetic. Acts by destroying the integrity of bacterial membranes, leading to bacterial death. Also exhibits potent anti-biofilm activity against P.aeruginosa. Shows high thermal stability and ion tolerance, as it maintains antibacterial activity even when heated to 100 degrees Celsius for 30 minutes and in presence of high levels of NaCl, CaCl(2) and MgCl(2). Does not show cytotoxicity and hemolytic activity. In a mouse model of burn infection, exhibits a remarkably reduction in the bacterial load caused by multidrug-resistant P.aeruginosa at the site of infection, and promotes wound healing. This Scylla paramamosain (Mud crab) protein is Scyreptin.